The sequence spans 492 residues: 3-ketoacyl-CoA synthase 5 (492 aa).

Helical transmembrane passes span 20–40 (LINN…AIEL) and 59–79 (LLHI…YFMS). The region spanning 76-365 (YFMSKPRTVY…FLSSLIGRKI (290 aa)) is the FAE domain. Residues cysteine 220, histidine 299, histidine 383, histidine 387, histidine 416, and asparagine 420 contribute to the active site.

The protein belongs to the thiolase-like superfamily. Chalcone/stilbene synthases family. In terms of tissue distribution, expressed in siliques, flowers, leaves and seedlings.

Its subcellular location is the membrane. It catalyses the reaction a very-long-chain acyl-CoA + malonyl-CoA + H(+) = a very-long-chain 3-oxoacyl-CoA + CO2 + CoA. Its pathway is lipid metabolism; fatty acid biosynthesis. Its activity is regulated as follows. Inhibited by K3 herbicides such as alachlor, allidochlor, anilofos, cafenstrole and flufenacet. Strongly inhibited by metazachlor and mefluidide. Its function is as follows. Mediates mostly the synthesis of VLCFAs from 26 to 30 carbons in length (e.g. C20:1, C26, C28, C30). This is 3-ketoacyl-CoA synthase 5 from Arabidopsis thaliana (Mouse-ear cress).